We begin with the raw amino-acid sequence, 246 residues long: Acetoacetate decarboxylase (246 aa).

The active-site Schiff-base intermediate with acetoacetate is Lys115.

The protein belongs to the ADC family.

It catalyses the reaction acetoacetate + H(+) = acetone + CO2. In terms of biological role, catalyzes the conversion of acetoacetate to acetone and carbon dioxide. This Clostridium beijerinckii (Clostridium MP) protein is Acetoacetate decarboxylase.